The sequence spans 172 residues: MVDKRESYTKEDLIASGRSELFGAGGPPLPSGNMLMMDRVVKMTEDGGKYDKGFVEAELDINPDLWFFSCHFIGDPVMPGCLGLDAMWQLVGFYLGWLGGEGKGRALGVGEVKFSGQVLPTAKKVSYRIHFKRVINRKLVMGVADGEVLVDGEVIYTASDLKVGLFKDTAAF.

The active site involves His-71.

Belongs to the thioester dehydratase family. FabA subfamily. Homodimer.

It is found in the cytoplasm. The enzyme catalyses a (3R)-hydroxyacyl-[ACP] = a (2E)-enoyl-[ACP] + H2O. It catalyses the reaction (3R)-hydroxydecanoyl-[ACP] = (2E)-decenoyl-[ACP] + H2O. The catalysed reaction is (2E)-decenoyl-[ACP] = (3Z)-decenoyl-[ACP]. Its pathway is lipid metabolism; fatty acid biosynthesis. In terms of biological role, necessary for the introduction of cis unsaturation into fatty acids. Catalyzes the dehydration of (3R)-3-hydroxydecanoyl-ACP to E-(2)-decenoyl-ACP and then its isomerization to Z-(3)-decenoyl-ACP. Can catalyze the dehydratase reaction for beta-hydroxyacyl-ACPs with saturated chain lengths up to 16:0, being most active on intermediate chain length. This is 3-hydroxydecanoyl-[acyl-carrier-protein] dehydratase from Erwinia tasmaniensis (strain DSM 17950 / CFBP 7177 / CIP 109463 / NCPPB 4357 / Et1/99).